The following is a 272-amino-acid chain: Phosphatidylglycerol--prolipoprotein diacylglyceryl transferase (272 aa).

Transmembrane regions (helical) follow at residues 19 to 39 (ISIR…YFLV), 58 to 78 (LNTV…VVFY), and 94 to 114 (WHGG…GLIF). Position 141 (Arg-141) interacts with a 1,2-diacyl-sn-glycero-3-phospho-(1'-sn-glycerol). Transmembrane regions (helical) follow at residues 207–227 (GTIL…IENF) and 234–254 (LGFI…MILC).

Belongs to the Lgt family.

The protein localises to the cell inner membrane. The enzyme catalyses L-cysteinyl-[prolipoprotein] + a 1,2-diacyl-sn-glycero-3-phospho-(1'-sn-glycerol) = an S-1,2-diacyl-sn-glyceryl-L-cysteinyl-[prolipoprotein] + sn-glycerol 1-phosphate + H(+). The protein operates within protein modification; lipoprotein biosynthesis (diacylglyceryl transfer). Catalyzes the transfer of the diacylglyceryl group from phosphatidylglycerol to the sulfhydryl group of the N-terminal cysteine of a prolipoprotein, the first step in the formation of mature lipoproteins. The chain is Phosphatidylglycerol--prolipoprotein diacylglyceryl transferase from Desulfotalea psychrophila (strain LSv54 / DSM 12343).